We begin with the raw amino-acid sequence, 605 residues long: IQ domain-containing protein IQM2 (605 aa).

The region spanning Lys105–Gln134 is the IQ domain. Residues Gln408–Val505 form a disordered region. The segment covering Ser425–Glu440 has biased composition (basic and acidic residues). Residues Asp462–Gln480 are compositionally biased toward acidic residues. A compositionally biased stretch (low complexity) spans Glu481–Pro490. A compositionally biased stretch (basic and acidic residues) spans Arg491–Val505.

As to expression, expressed in rosette and cauline leaves, stems, flowers and siliques, and at lower levels in roots.

The protein localises to the cytoplasm. Its subcellular location is the nucleus. Its function is as follows. May be involved in biotic and abiotic stress responses. This Arabidopsis thaliana (Mouse-ear cress) protein is IQ domain-containing protein IQM2.